Reading from the N-terminus, the 120-residue chain is ATP synthase subunit a (120 aa).

Transmembrane regions (helical) follow at residues 2–22 (FFYS…YSYL), 29–49 (FFPF…VGIV), 59–79 (LNIT…LGFY), and 94–116 (IPFV…RSVG).

This sequence belongs to the ATPase A chain family. In terms of assembly, F-type ATPases have 2 components, CF(1) - the catalytic core - and CF(0) - the membrane proton channel. CF(1) has five subunits: alpha(3), beta(3), gamma(1), delta(1), epsilon(1). CF(0) has three main subunits: a, b and c.

It localises to the mitochondrion inner membrane. Functionally, mitochondrial membrane ATP synthase (F(1)F(0) ATP synthase or Complex V) produces ATP from ADP in the presence of a proton gradient across the membrane which is generated by electron transport complexes of the respiratory chain. F-type ATPases consist of two structural domains, F(1) - containing the extramembraneous catalytic core and F(0) - containing the membrane proton channel, linked together by a central stalk and a peripheral stalk. During catalysis, ATP synthesis in the catalytic domain of F(1) is coupled via a rotary mechanism of the central stalk subunits to proton translocation. Key component of the proton channel; it may play a direct role in the translocation of protons across the membrane. The polypeptide is ATP synthase subunit a (ATP6) (Naegleria fowleri (Brain eating amoeba)).